The primary structure comprises 149 residues: Calmodulin-1 (149 aa).

Ala2 bears the N-acetylalanine mark. EF-hand domains are found at residues 8 to 43, 44 to 79, 81 to 116, and 117 to 149; these read EQIA…LGQN, PTEA…KMKD, DSEE…LGEK, and LTDE…MTAK. A Ca(2+)-binding site is contributed by Asp21. Lys22 bears the N6-acetyllysine; alternate mark. Lys22 is covalently cross-linked (Glycyl lysine isopeptide (Lys-Gly) (interchain with G-Cter in SUMO2); alternate). Lys22 participates in a covalent cross-link: Glycyl lysine isopeptide (Lys-Gly) (interchain with G-Cter in ubiquitin); alternate. Residues Asp23, Asp25, Thr27, and Glu32 each contribute to the Ca(2+) site. A Phosphothreonine; by CaMK4 modification is found at Thr45. Ca(2+) is bound by residues Asp57, Asp59, Asn61, Thr63, and Glu68. Residues 77-149 are necessary and sufficient for interaction with PCP4; the sequence is MKDTDSEEEI…EEFVQMMTAK (73 aa). Position 82 is a phosphoserine (Ser82). Asp94 provides a ligand contact to Ca(2+). The residue at position 95 (Lys95) is an N6-acetyllysine. Asp96, Asn98, and Tyr100 together coordinate Ca(2+). Residue Tyr100 is modified to Phosphotyrosine. Ser102 is modified (phosphoserine). Glu105 is a Ca(2+) binding site. Thr111 is modified (phosphothreonine). Position 116 is an N6,N6,N6-trimethyllysine; alternate (Lys116). Lys116 is modified (N6-methyllysine; alternate). Residues Asp130, Asp132, Asp134, and Gln136 each contribute to the Ca(2+) site. Tyr139 is modified (phosphotyrosine). Residue Glu141 participates in Ca(2+) binding.

This sequence belongs to the calmodulin family. As to quaternary structure, homotetramer. Interacts with MYO1C, MYO5A and RRAD. Interacts with MYO10. Interacts with CEP97, CCP110, TTN/titin and SRY. Interacts with USP6; the interaction is calcium dependent. Interacts with CDK5RAP2. Interacts with SCN5A. Interacts with RYR1. Interacts with FCHO1. Interacts with MIP in a 1:2 stoichiometry; the interaction with the cytoplasmic domains from two MIP subunits promotes MIP water channel closure. Interacts with ORAI1; this may play a role in the regulation of ORAI1-mediated calcium transport. Interacts with IQCF1. Interacts with SYT7. Interacts with CEACAM1 (via cytoplasmic domain); this interaction is in a calcium dependent manner and reduces homophilic cell adhesion through dissociation of dimer. Interacts with RYR2; regulates RYR2 calcium-release channel activity. Interacts with PCP4; regulates calmodulin calcium-binding. Interacts with the heterotetrameric KCNQ2 and KCNQ3 channel; the interaction is calcium-independent, constitutive and participates in the proper assembly of a functional heterotetrameric M channel. Interacts with alpha-synuclein/SNCA. Interacts with SLC9A1 in a calcium-dependent manner. In the absence of Ca(+2), interacts with GIMAP4 (via IQ domain). Interacts with SCN8A; the interaction modulates the inactivation rate of SCN8A. Interaction with KIF1A; the interaction is increased in presence of calcium and increases neuronal dense core vesicles motility. Interacts with KCNN3. Interacts with KCNQ1 (via C-terminus); forms a heterooctameric structure (with 4:4 KCNQ1:CALM stoichiometry) in a calcium-independent manner. Interacts with PIK3C3; the interaction modulates PIK3C3 kinase activity. Interacts with HINT1; interaction increases in the presence of calcium ions. Interacts with HINT3. Interacts with GARIN2; in mature sperm flagella. Interacts with IQUB. Interacts with SLC26A5 (via STAS domain); this interaction is calcium-dependent and the STAS domain interacts with only one lobe of CALM which is an elongated conformation. Ca(2+)-bound CALM1 binds CNGA1:CNGB1 channel (via CaM1 and CaM2 regions); this interaction modulates the affinity of the channel for cNMPs in response to intracellular Ca(2+) levels. Interacts with ITPR1; this interaction inhibits inositol 1,4,5 trisphosphate binding in both the presence and absence of calcium and 1,4,5 trisphosphate-induced calcium release in the presence of calcium. Component of the SIFI complex. Interacts with KCNN4; this interaction allows channel opening. Interacts with KCNN2; this interaction regulates the channel activity through calcium-binding. In terms of assembly, (Microbial infection) Interacts with Rubella virus protease/methyltransferase p150. (Microbial infection) Interacts with Legionella pneumophila glutamylase SidJ. As to quaternary structure, (Microbial infection) Interacts with C.violaceum CopC. C.violaceum CopC interacts specifically with the apo form of calmodulin. In terms of assembly, (Microbial infection) Interacts with S.flexneri OspC1 and OspC3. S.flexneri OspC1 and OspC3 interact specifically with the apo form of calmodulin and prevents calcium-binding. In terms of processing, ubiquitination results in a strongly decreased activity. Post-translationally, phosphorylation results in a decreased activity.

It is found in the cytoplasm. Its subcellular location is the cytoskeleton. The protein localises to the spindle. The protein resides in the spindle pole. It localises to the microtubule organizing center. It is found in the centrosome. Its subcellular location is the cell projection. The protein localises to the cilium. The protein resides in the flagellum. (Microbial infection) Inactivated by S.flexneri OspC1 and OspC3 proteins, which specifically bind the apo-form of calmodulin, thereby preventing calcium-binding and activity. Functionally, calmodulin acts as part of a calcium signal transduction pathway by mediating the control of a large number of enzymes, ion channels, aquaporins and other proteins through calcium-binding. Calcium-binding is required for the activation of calmodulin. Among the enzymes to be stimulated by the calmodulin-calcium complex are a number of protein kinases, such as myosin light-chain kinases and calmodulin-dependent protein kinase type II (CaMK2), and phosphatases. Together with CCP110 and centrin, is involved in a genetic pathway that regulates the centrosome cycle and progression through cytokinesis. Is a regulator of voltage-dependent L-type calcium channels. Mediates calcium-dependent inactivation of CACNA1C. Positively regulates calcium-activated potassium channel activity of KCNN2. Forms a potassium channel complex with KCNQ1 and regulates electrophysiological activity of the channel via calcium-binding. Acts as a sensor to modulate the endoplasmic reticulum contacts with other organelles mediated by VMP1:ATP2A2. Its function is as follows. (Microbial infection) Required for Legionella pneumophila SidJ glutamylase activity. In terms of biological role, (Microbial infection) Required for C.violaceum CopC and S.flexneri OspC3 arginine ADP-riboxanase activity. The sequence is that of Calmodulin-1 from Homo sapiens (Human).